Here is a 137-residue protein sequence, read N- to C-terminus: MRNPDFSPLYRSAIGFDRLFNLLETGQTQSNGGYPPYNVELVDENQYRIAIAVAGFAEQELDITAHDNLLIVKGAHAGEQVARNYLYQGIAERNFERKFQLAEHIQVKGANLENGLLYIDLERIVPEAMKPRRIEIK.

Residues 28-137 (TQSNGGYPPY…AMKPRRIEIK (110 aa)) form the sHSP domain.

Belongs to the small heat shock protein (HSP20) family. In terms of assembly, monomer. Forms homomultimers of about 100-150 subunits at optimal growth temperatures. Conformation changes to monomers at high temperatures or high ionic concentrations.

The protein localises to the cytoplasm. Functionally, associates with aggregated proteins, together with IbpB, to stabilize and protect them from irreversible denaturation and extensive proteolysis during heat shock and oxidative stress. Aggregated proteins bound to the IbpAB complex are more efficiently refolded and reactivated by the ATP-dependent chaperone systems ClpB and DnaK/DnaJ/GrpE. Its activity is ATP-independent. This is Small heat shock protein IbpA from Pectobacterium atrosepticum (strain SCRI 1043 / ATCC BAA-672) (Erwinia carotovora subsp. atroseptica).